Consider the following 503-residue polypeptide: Lysine--tRNA ligase (503 aa).

Positions 23-31 (PSGPIHVGN) match the 'HIGH' region motif. The 'KMSKS' region signature appears at 267-271 (AMHSS).

The protein belongs to the class-I aminoacyl-tRNA synthetase family.

It is found in the cytoplasm. The catalysed reaction is tRNA(Lys) + L-lysine + ATP = L-lysyl-tRNA(Lys) + AMP + diphosphate. In Thermoplasma volcanium (strain ATCC 51530 / DSM 4299 / JCM 9571 / NBRC 15438 / GSS1), this protein is Lysine--tRNA ligase.